We begin with the raw amino-acid sequence, 65 residues long: Alpha-toxin Lqq4 (65 aa).

One can recognise an LCN-type CS-alpha/beta domain in the interval 3–65; the sequence is RDAYIADDKN…VPIRIPGKCR (63 aa). The segment at 9 to 13 is specificity module, loop 1; it reads DDKNC. Cystine bridges form between Cys-13-Cys-64, Cys-17-Cys-37, Cys-23-Cys-47, and Cys-27-Cys-49. Specificity module, loop regions lie at residues 40–44 and 57–65; these read LGKYG and PIRIPGKCR. Arg-65 is subject to Arginine amide.

Belongs to the long (4 C-C) scorpion toxin superfamily. Sodium channel inhibitor family. Alpha subfamily. The recombinant toxin which is used for activity tests is not amidated. However, C-terminal amidation does not appear to play an important role in activity, since the non-amidated recombinant toxin and the native toxin (which is amidated) show similar activities on all sodium channels tested. As to expression, expressed by the venom gland.

The protein localises to the secreted. Its function is as follows. Alpha toxins bind voltage-independently at site-3 of sodium channels (Nav) and inhibit the inactivation of the activated channels, thereby blocking neuronal transmission. Both native and recombinant (non-amidated) toxins inhibit inactivation of Nav1.2/SCN2A (EC(50)=31.2-36.6 nM), Nav1.6/SCN8A (EC(50)=6.9-8.9 nM), and Nav1.7/SCN9A (EC(50)=182.0-260.1 nM). The chain is Alpha-toxin Lqq4 from Leiurus quinquestriatus quinquestriatus (Egyptian scorpion).